A 2167-amino-acid chain; its full sequence is SH3 and multiple ankyrin repeat domains protein 1 (2167 aa).

The interval 1–63 (MTHSPATSED…TRGLQGRSMS (63 aa)) is disordered. Low complexity predominate over residues 17–32 (SECPEGGSESDSSPDG). Gly residues predominate over residues 33–47 (PGRGPQGTRGRGSGA). Residue Arg43 is modified to Omega-N-methylarginine. Position 186 is a phosphotyrosine (Tyr186). ANK repeat units lie at residues 212-242 (SGETPLTLAAQTEGSVEVIRTLCLGGAHIDF), 246-275 (DGMTALHKAACARHCLALTALLDLGGSPNY), 279-309 (RGLTPLFHTAMVGGDPRCCELLLYNRAQLGI), 313-342 (NGWQEIHQACQRGHSQHLEHLLFYGAEPGA), 346-375 (SGNTALHICALYNKETCARILLYRGANKDV), and 379-407 (NGQTPFQVAVIAGNFELGELIRNHREQDV). 2 disordered regions span residues 413-432 (SPKYAARRRGPPGAGLTVPP) and 454-546 (PGAS…SRGR). The segment covering 454–479 (PGASSSGTPGPTSGSQGQSQPSAPST) has biased composition (low complexity). The segment covering 527 to 542 (PAGGTGGSGGPGGSLG) has biased composition (gly residues). Phosphoserine is present on Ser540. An Omega-N-methylarginine modification is found at Arg544. The 60-residue stretch at 554–613 (VPGRSFMAVKSYQAQGEGEISLSKGEKIKVLSIGEGGFWEGQVKGRVGWFPSDCLEEVAN) folds into the SH3 domain. Positions 663–757 (TVLLQKKDSE…TLMVKVVMVT (95 aa)) constitute a PDZ domain. 2 positions are modified to phosphoserine: Ser671 and Ser791. The segment at 841 to 894 (ISASESPGPGGLASLGKHRPKGFFATESSFDPHHRSQPSYDRPSFLPPGPGLML) is disordered. Ser898 is modified (phosphoserine). Disordered regions lie at residues 917–1233 (SRSL…LDFT) and 1245–1290 (RREG…RHSK). A compositionally biased stretch (pro residues) spans 928–947 (IPPPPTTSPPEPPYSTPPAP). Residue Arg958 is modified to Omega-N-methylarginine. Low complexity predominate over residues 969–980 (PLPASSPSSFDG). Basic residues predominate over residues 1004-1028 (AHHHPPHHHHHHAPPPQPHHHHAHP). Arg1059 is modified (omega-N-methylarginine). The segment covering 1064–1089 (SPTSGAPSPSHHSSSGGSSGPAQAPA) has biased composition (low complexity). 2 positions are modified to omega-N-methylarginine: Arg1098 and Arg1109. Low complexity-rich tracts occupy residues 1132–1146 (SLPPASSPTSPALPR) and 1171–1184 (STSSSGRSSQGSST). A compositionally biased stretch (pro residues) spans 1203 to 1224 (SPAPATSPVPPSPSPVPTPASP). Residues 1245 to 1256 (RREGGWQNEARR) show a composition bias toward basic and acidic residues. Arg1257 carries the asymmetric dimethylarginine modification. Position 1291 is a phosphoserine (Ser1291). Disordered stretches follow at residues 1308 to 1331 (GGSSGGYGAYAAGSRAYGGSGSSS), 1361 to 1417 (LAAR…VLRL), 1429 to 1458 (RAGLGSQEKALTASPPAARRSLLHRLPPTA), 1500 to 1725 (FLEN…AGVA), 1740 to 1790 (GQAF…TPTS), 1828 to 1866 (VPPVPLPTASSLPRKLLPWEEGPGPPPPPLPGPLSQPQA), 1898 to 1988 (PWAR…STRH), and 2002 to 2029 (RRAPSPSLLPASDHKVSPAPRPSSLPIL). Over residues 1363-1372 (ARERALKESS) the composition is skewed to basic and acidic residues. Residues 1378–1395 (PQPPPRPPSPRYDAPPPT) are compositionally biased toward pro residues. A compositionally biased stretch (basic residues) spans 1396 to 1408 (LHHHSPHSPHSPH). At Arg1429 the chain carries Omega-N-methylarginine. Ser1442 bears the Phosphoserine mark. Over residues 1530-1541 (RRVLPTSPTSPR) the composition is skewed to low complexity. The span at 1589–1615 (PLTPGPPHPLPDPPSPATPLPAAPPPA) shows a compositional bias: pro residues. Polar residues predominate over residues 1624–1641 (DSTASSLTSYDSEVATLT). Residues 1648–1676 (PGDPPAPGPPAPAAPAPPAPQPGPDPPPG) are compositionally biased toward pro residues. Residues 1684–1694 (VDSRSSSDHPL) are compositionally biased toward basic and acidic residues. The segment covering 1695-1708 (ETISSASTLSSLSA) has biased composition (low complexity). Residues 1709 to 1724 (EGGGNTGGVAGGGAGV) are compositionally biased toward gly residues. Pro residues predominate over residues 1850–1861 (PGPPPPPLPGPL). Arg1901 is modified (omega-N-methylarginine). Low complexity-rich tracts occupy residues 1934–1945 (SQTSLLSKPSSS), 1960–1985 (TGSGVSSSTAAAPGATSPSASSASAS), and 2002–2012 (RRAPSPSLLPA). 3 positions are modified to omega-N-methylarginine: Arg2022, Arg2042, and Arg2080. Residues 2104 to 2167 (WTKFDVADWL…DRALKFFLER (64 aa)) enclose the SAM domain.

This sequence belongs to the SHANK family. May homomultimerize via its SAM domain. Interacts with the C-terminus of SSTR2 via the PDZ domain. Interacts with SHARPIN, SPTAN1, HOMER1 and DLGAP1/GKAP. Part of a complex with DLG4/PSD-95 and DLGAP1/GKAP. Interacts with BAIAP2. Interacts with IGSF9. Interacts with HOMER1 and HOMER3. As to expression, in brain, highly expressed in cortex, hippocampus and cerebellum.

It localises to the cytoplasm. The protein resides in the synapse. It is found in the postsynaptic density. In terms of biological role, seems to be an adapter protein in the postsynaptic density (PSD) of excitatory synapses that interconnects receptors of the postsynaptic membrane including NMDA-type and metabotropic glutamate receptors, and the actin-based cytoskeleton. Plays a role in the structural and functional organization of the dendritic spine and synaptic junction. Overexpression promotes maturation of dendritic spines and the enlargement of spine heads via its ability to recruit Homer to postsynaptic sites, and enhances presynaptic function. The polypeptide is SH3 and multiple ankyrin repeat domains protein 1 (Shank1) (Mus musculus (Mouse)).